Reading from the N-terminus, the 92-residue chain is Small ribosomal subunit protein uS19c (92 aa).

It belongs to the universal ribosomal protein uS19 family.

It is found in the plastid. It localises to the chloroplast. Its function is as follows. Protein S19 forms a complex with S13 that binds strongly to the 16S ribosomal RNA. The chain is Small ribosomal subunit protein uS19c from Guizotia abyssinica (Niger).